A 386-amino-acid chain; its full sequence is Succinate--CoA ligase [ADP-forming] subunit beta (386 aa).

Residues 9–244 (KDLLTSYAIP…PSQENVRDVL (236 aa)) enclose the ATP-grasp domain. Residues Lys-46, 53–55 (GRG), Val-102, and Glu-107 contribute to the ATP site. Mg(2+) contacts are provided by Asn-199 and Asp-213. Substrate is bound by residues Asn-264 and 321–323 (GIM).

It belongs to the succinate/malate CoA ligase beta subunit family. Heterotetramer of two alpha and two beta subunits. It depends on Mg(2+) as a cofactor.

The enzyme catalyses succinate + ATP + CoA = succinyl-CoA + ADP + phosphate. It carries out the reaction GTP + succinate + CoA = succinyl-CoA + GDP + phosphate. The protein operates within carbohydrate metabolism; tricarboxylic acid cycle; succinate from succinyl-CoA (ligase route): step 1/1. Its function is as follows. Succinyl-CoA synthetase functions in the citric acid cycle (TCA), coupling the hydrolysis of succinyl-CoA to the synthesis of either ATP or GTP and thus represents the only step of substrate-level phosphorylation in the TCA. The beta subunit provides nucleotide specificity of the enzyme and binds the substrate succinate, while the binding sites for coenzyme A and phosphate are found in the alpha subunit. In Chlamydia abortus (strain DSM 27085 / S26/3) (Chlamydophila abortus), this protein is Succinate--CoA ligase [ADP-forming] subunit beta.